A 342-amino-acid polypeptide reads, in one-letter code: Biotin synthase (342 aa).

One can recognise a Radical SAM core domain in the interval 63–290 (NTVQLSTLLS…GAMVRLSAGR (228 aa)). 3 residues coordinate [4Fe-4S] cluster: C78, C82, and C85. Residues C122, C153, C213, and R285 each coordinate [2Fe-2S] cluster.

Belongs to the radical SAM superfamily. Biotin synthase family. As to quaternary structure, homodimer. [4Fe-4S] cluster serves as cofactor. [2Fe-2S] cluster is required as a cofactor.

It catalyses the reaction (4R,5S)-dethiobiotin + (sulfur carrier)-SH + 2 reduced [2Fe-2S]-[ferredoxin] + 2 S-adenosyl-L-methionine = (sulfur carrier)-H + biotin + 2 5'-deoxyadenosine + 2 L-methionine + 2 oxidized [2Fe-2S]-[ferredoxin]. Its pathway is cofactor biosynthesis; biotin biosynthesis; biotin from 7,8-diaminononanoate: step 2/2. Catalyzes the conversion of dethiobiotin (DTB) to biotin by the insertion of a sulfur atom into dethiobiotin via a radical-based mechanism. In Cupriavidus pinatubonensis (strain JMP 134 / LMG 1197) (Cupriavidus necator (strain JMP 134)), this protein is Biotin synthase.